A 356-amino-acid polypeptide reads, in one-letter code: Transcription factor MafB (356 aa).

Disordered stretches follow at residues 49 to 79 and 140 to 240; these read RLQP…PTEQ and YRGA…LNVE. The span at 55 to 77 shows a compositional bias: low complexity; sequence SVSSTPISTPCSSVPSSPSFSPT. Composition is skewed to basic residues over residues 183–196 and 212–223; these read AHGH…HHHH and HHRHHHHHHPHG. The basic motif stretch occupies residues 270-295; that stretch reads RLKQKRRTLKNRGYAQSCRFKRVQQK. Residues 270 to 333 enclose the bZIP domain; that stretch reads RLKQKRRTLK…DAYKLKCEKL (64 aa). The interval 298 to 319 is leucine-zipper; it reads LENEKTQLINQVEQLKQEINRL.

This sequence belongs to the bZIP family. Maf subfamily. Homodimer or heterodimer with other bHLH-Zip transcription factors. Binds DNA as a homodimer or a heterodimer.

Its subcellular location is the nucleus. Its function is as follows. May act as a transcriptional activator or repressor. Involved in neurogenesis. Involved in the development of rhombomeres (r) 5 and 6 segments from their common precursor 'proto-segment' in the hindbrain. This is Transcription factor MafB (mafb) from Danio rerio (Zebrafish).